The chain runs to 260 residues: MAFVPPQAGYDRAITVFSPDGRLFQVNYAREAVKRGATAVGVKWKDGVVLAVEKRITSKLIEPSSYEKIFLIDDHIAAAPSGIIADARVLVDRARLEAQIYRLTYGEPVPLTVLVKKICDLKQAHTQYGGVRPFGAALLMAGVNEKPELFETDPSGAYFEWKAVAIGSGRNTAMAIFEEHYRDDIGKDDAIKLAILALAKTLEEPTAEGIEVAYITMDEKRWKKLPREELEKYLNEILQEVKEEEVEEKQEDYSELDQNY.

Belongs to the peptidase T1A family. The 20S proteasome core is composed of 14 alpha and 14 beta subunits that assemble into four stacked heptameric rings, resulting in a barrel-shaped structure. The two inner rings, each composed of seven catalytic beta subunits, are sandwiched by two outer rings, each composed of seven alpha subunits. The catalytic chamber with the active sites is on the inside of the barrel. Has a gated structure, the ends of the cylinder being occluded by the N-termini of the alpha-subunits. Is capped at one or both ends by the proteasome regulatory ATPase, PAN.

It localises to the cytoplasm. Its activity is regulated as follows. The formation of the proteasomal ATPase PAN-20S proteasome complex, via the docking of the C-termini of PAN into the intersubunit pockets in the alpha-rings, triggers opening of the gate for substrate entry. Interconversion between the open-gate and close-gate conformations leads to a dynamic regulation of the 20S proteasome proteolysis activity. Functionally, component of the proteasome core, a large protease complex with broad specificity involved in protein degradation. The polypeptide is Proteasome subunit alpha (Thermococcus sp. (strain JCM 11816 / KS-1)).